The primary structure comprises 58 residues: Small ribosomal subunit protein eS31 (58 aa).

Residues Cys29, Cys32, Cys48, and Cys51 each coordinate Zn(2+). The C4-type zinc finger occupies 29–51 (CPRCGSFMAHHLKPVPRWHCGKC).

It belongs to the eukaryotic ribosomal protein eS31 family. Part of the 30S ribosomal subunit. The cofactor is Zn(2+).

The sequence is that of Small ribosomal subunit protein eS31 from Ignicoccus hospitalis (strain KIN4/I / DSM 18386 / JCM 14125).